A 137-amino-acid chain; its full sequence is Fluoride-specific ion channel FluC (137 aa).

4 helical membrane-spanning segments follow: residues 11–31 (IAVS…SLWF), 42–62 (GTLF…ALAL), 75–95 (LIAV…LDTF), and 107–127 (GFYW…GIIL). The Na(+) site is built by Gly-82 and Thr-85.

It belongs to the fluoride channel Fluc/FEX (TC 1.A.43) family.

Its subcellular location is the cell inner membrane. It catalyses the reaction fluoride(in) = fluoride(out). Na(+) is not transported, but it plays an essential structural role and its presence is essential for fluoride channel function. In terms of biological role, fluoride-specific ion channel. Important for reducing fluoride concentration in the cell, thus reducing its toxicity. This is Fluoride-specific ion channel FluC from Trichormus variabilis (strain ATCC 29413 / PCC 7937) (Anabaena variabilis).